Here is a 795-residue protein sequence, read N- to C-terminus: Phenylalanine--tRNA ligase beta subunit (795 aa).

Residues 39–148 enclose the tRNA-binding domain; that stretch reads AGEFNGVVVG…ADAPIGVDVR (110 aa). The B5 domain maps to 401–476; it reads PKQATITLRR…RIYGYNNIPD (76 aa). D454, D460, E463, and E464 together coordinate Mg(2+). One can recognise an FDX-ACB domain in the interval 701 to 794; the sequence is SRFPANRRDI…LKQRFQASLR (94 aa).

This sequence belongs to the phenylalanyl-tRNA synthetase beta subunit family. Type 1 subfamily. As to quaternary structure, tetramer of two alpha and two beta subunits. The cofactor is Mg(2+).

Its subcellular location is the cytoplasm. It carries out the reaction tRNA(Phe) + L-phenylalanine + ATP = L-phenylalanyl-tRNA(Phe) + AMP + diphosphate + H(+). The protein is Phenylalanine--tRNA ligase beta subunit of Yersinia pestis.